The sequence spans 432 residues: Proline--tRNA ligase (432 aa).

This sequence belongs to the class-II aminoacyl-tRNA synthetase family. ProS type 2 subfamily. In terms of assembly, homodimer.

It is found in the cytoplasm. The catalysed reaction is tRNA(Pro) + L-proline + ATP = L-prolyl-tRNA(Pro) + AMP + diphosphate. Catalyzes the attachment of proline to tRNA(Pro) in a two-step reaction: proline is first activated by ATP to form Pro-AMP and then transferred to the acceptor end of tRNA(Pro). This is Proline--tRNA ligase from Rickettsia bellii (strain OSU 85-389).